The sequence spans 195 residues: Probable septum site-determining protein MinC (195 aa).

Belongs to the MinC family. In terms of assembly, interacts with MinD and FtsZ.

Cell division inhibitor that blocks the formation of polar Z ring septums. Rapidly oscillates between the poles of the cell to destabilize FtsZ filaments that have formed before they mature into polar Z rings. Prevents FtsZ polymerization. This Helicobacter pylori (strain P12) protein is Probable septum site-determining protein MinC.